A 560-amino-acid polypeptide reads, in one-letter code: Chaperonin GroEL 2 (560 aa).

ATP is bound by residues 29-32 (TLGP), Lys-50, 86-90 (DGTTT), Gly-414, and Asp-494. Positions 524–546 (EDEDDDDGGGGGGGGMPAGGAGG) are disordered. The span at 532–546 (GGGGGGGMPAGGAGG) shows a compositional bias: gly residues.

This sequence belongs to the chaperonin (HSP60) family. As to quaternary structure, forms a cylinder of 14 subunits composed of two heptameric rings stacked back-to-back. Interacts with the co-chaperonin GroES.

It localises to the cytoplasm. It catalyses the reaction ATP + H2O + a folded polypeptide = ADP + phosphate + an unfolded polypeptide.. Its function is as follows. Together with its co-chaperonin GroES, plays an essential role in assisting protein folding. The GroEL-GroES system forms a nano-cage that allows encapsulation of the non-native substrate proteins and provides a physical environment optimized to promote and accelerate protein folding. The polypeptide is Chaperonin GroEL 2 (Salinibacter ruber (strain DSM 13855 / M31)).